Here is a 336-residue protein sequence, read N- to C-terminus: Putative cysteine synthase (336 aa).

An N6-(pyridoxal phosphate)lysine modification is found at Lys41. Pyridoxal 5'-phosphate is bound by residues Asn71, 179–183 (GTGGS), and Ser269.

The protein belongs to the cysteine synthase/cystathionine beta-synthase family. Pyridoxal 5'-phosphate is required as a cofactor.

It catalyses the reaction O-acetyl-L-serine + hydrogen sulfide = L-cysteine + acetate. Functionally, as it is highly similar to bacterial and plant cysteine synthases, it is possible that it catalyzes a related reaction. This chain is Putative cysteine synthase, found in Sinorhizobium fredii (strain NBRC 101917 / NGR234).